We begin with the raw amino-acid sequence, 560 residues long: Clathrin interactor EPSIN 1 (560 aa).

In terms of domain architecture, ENTH spans 20–152 (LKVLKVPEME…NNKEKISEIR (133 aa)). Positions 190-288 (NFDSYKDRDS…KPSTGSANQV (99 aa)) are disordered. The span at 193–220 (SYKDRDSREDKNDYESFQKSRRGVKTEE) shows a compositional bias: basic and acidic residues. Over residues 221-233 (QSYTSKKSFSRYG) the composition is skewed to polar residues. Positions 234-251 (STDHDNLSSGKKSPDSAK) are enriched in basic and acidic residues. A compositionally biased stretch (polar residues) spans 274–287 (GTSSNKPSTGSANQ). A Clathrin binding motif is present at residues 296-300 (IGDFL). The ALPHA-ADR binding motif lies at 320-322 (DLF). Polar residues predominate over residues 414 to 439 (SHSASVSTGPQAPSVHGSATNTTSPL). Disordered stretches follow at residues 414 to 453 (SHSA…QKKD) and 517 to 560 (LGKT…GFKQ). Residues 526–536 (QQQQQQQQQQQ) show a composition bias toward low complexity. The segment covering 544-554 (FFSSLSNQRYQ) has biased composition (polar residues).

It belongs to the epsin family. Interacts with clathrin, VTI11, GAMMA-ADR and VSR1. Binds to the deubiquitinating enzyme AMSH3. Mostly expressed in cotyledons and flowers, and, to a lower extent, in roots, leaves and siliques (at protein level).

The protein resides in the golgi apparatus. It localises to the prevacuolar compartment. The protein localises to the cytoplasm. Its subcellular location is the cytoplasmic vesicle. It is found in the clathrin-coated vesicle. The protein resides in the cytoskeleton. Functionally, may have a role in transport via clathrin-coated vesicles from the trans-Golgi network to endosomes. Stimulates clathrin assembly. Does not seem to bind to phospholipids. Plays an important role in the vacuolar trafficking of soluble cargo proteins at the trans-Golgi network. In Arabidopsis thaliana (Mouse-ear cress), this protein is Clathrin interactor EPSIN 1 (EPSIN1).